The following is a 197-amino-acid chain: MEAFTTHTGRAVPLRRSNVDTDQIIPAHWLKKVTRDGFEDGLFEAWRKDENFVLNRPERQGASVLVAGPDFGTGSSREHAVWALQNYGFKAVISSRFADIFRGNSLKNGLLTVVLEQSVVDALWELSEADPTAEVTVDLEARQVRAEGITADFELDENARWRLLNGLDDISLTLQNEADIAAYEAARPAFKPRTIAA.

It belongs to the LeuD family. LeuD type 1 subfamily. As to quaternary structure, heterodimer of LeuC and LeuD.

The enzyme catalyses (2R,3S)-3-isopropylmalate = (2S)-2-isopropylmalate. It functions in the pathway amino-acid biosynthesis; L-leucine biosynthesis; L-leucine from 3-methyl-2-oxobutanoate: step 2/4. In terms of biological role, catalyzes the isomerization between 2-isopropylmalate and 3-isopropylmalate, via the formation of 2-isopropylmaleate. The sequence is that of 3-isopropylmalate dehydratase small subunit from Streptomyces griseus subsp. griseus (strain JCM 4626 / CBS 651.72 / NBRC 13350 / KCC S-0626 / ISP 5235).